A 153-amino-acid polypeptide reads, in one-letter code: Large ribosomal subunit protein uL30 (153 aa).

This sequence belongs to the universal ribosomal protein uL30 family. As to quaternary structure, part of the 50S ribosomal subunit.

The chain is Large ribosomal subunit protein uL30 from Methanosarcina barkeri (strain Fusaro / DSM 804).